We begin with the raw amino-acid sequence, 117 residues long: MLVNARAIRQSIGIVVAQCRRDLESNRTLDYRTRMRTSLILVAMVMVSVLLPYTYGSSCDSFCTEQANKCLTGCEGFVGCMECTNFAGHCREQCRKRSVKRRKEIRARFTKEPTEES.

Residues 1 to 36 (MLVNARAIRQSIGIVVAQCRRDLESNRTLDYRTRMR) lie on the Cytoplasmic side of the membrane. Residues 37-56 (TSLILVAMVMVSVLLPYTYG) traverse the membrane as a helical segment. Topologically, residues 57 to 117 (SSCDSFCTEQ…RFTKEPTEES (61 aa)) are extracellular. 4 disulfide bridges follow: Cys59–Cys94, Cys63–Cys90, Cys70–Cys83, and Cys74–Cys80.

Post-translationally, the mature peptide may be cleaved at a dibasic residue site and be shorter than the sequence shown (possibly residues 1-94). Expressed in endodermal ganglion neurons, apparently bipolar and following mesentery folds (observed in both planulae and primary polyps). It not expressed in nematocytes.

It localises to the membrane. This chain is Protein Aeq5-like2, found in Nematostella vectensis (Starlet sea anemone).